Reading from the N-terminus, the 891-residue chain is DNA mismatch repair protein MutS (891 aa).

646–653 is a binding site for ATP; sequence GPNMAGKS.

The protein belongs to the DNA mismatch repair MutS family.

This protein is involved in the repair of mismatches in DNA. It is possible that it carries out the mismatch recognition step. This protein has a weak ATPase activity. The sequence is that of DNA mismatch repair protein MutS from Rickettsia typhi (strain ATCC VR-144 / Wilmington).